The chain runs to 182 residues: ADP-ribosylation factor-like protein 3 (182 aa).

Residue Gly2 is the site of N-myristoyl glycine attachment. Residue Ser5 is modified to Phosphoserine. Residues 24-31, Thr48, 67-71, Gly70, 126-129, and 159-161 each bind GTP; these read GLDNAGKT, DIGGQ, NKQD, and SAL. Thr31 and Thr48 together coordinate Mg(2+).

Belongs to the small GTPase superfamily. Arf family. Found in a complex with ARL3, RP2 and UNC119 (or UNC119B); RP2 induces hydrolysis of GTP ARL3 in the complex, leading to the release of UNC119 (or UNC119B). Interacts with RP2; interaction is direct and stimulated with the activated GTP-bound form of ARL3. Interacts with SYS1. Interacts with ARL2BP; the GTP-bound form interacts with ARL2BP. Microtubule-associated protein. Does not interact with TBCC. Interacts with RP2. Interacts with PDE6D; the interaction occurs specifically with the GTP-bound form of ARL3. Interacts with GGA1; the interaction recruits PKD1:PKD2 complex to trans-Golgi network and is required for ciliary targeting of PKD1:PKD2 complex. Interacts with DNAAF9.

It is found in the golgi apparatus membrane. It localises to the cytoplasm. The protein localises to the cytoskeleton. Its subcellular location is the spindle. The protein resides in the nucleus. It is found in the microtubule organizing center. It localises to the centrosome. The protein localises to the cell projection. Its subcellular location is the cilium. In terms of biological role, small GTP-binding protein which cycles between an inactive GDP-bound and an active GTP-bound form, and the rate of cycling is regulated by guanine nucleotide exchange factors (GEF) and GTPase-activating proteins (GAP). Required for normal cytokinesis and cilia signaling. Requires assistance from GTPase-activating proteins (GAPs) like RP2 and PDE6D, in order to cycle between inactive GDP-bound and active GTP-bound forms. Required for targeting proteins to the cilium, including myristoylated NPHP3 and prenylated INPP5E. Targets NPHP3 to the ciliary membrane by releasing myristoylated NPHP3 from UNC119B cargo adapter into the cilium. Required for PKD1:PKD2 complex targeting from the trans-Golgi network to the cilium. This is ADP-ribosylation factor-like protein 3 (Arl3) from Rattus norvegicus (Rat).